Reading from the N-terminus, the 264-residue chain is tRNA pseudouridine synthase A (264 aa).

The Nucleophile role is filled by aspartate 51. Tyrosine 109 serves as a coordination point for substrate.

The protein belongs to the tRNA pseudouridine synthase TruA family. Homodimer.

It carries out the reaction uridine(38/39/40) in tRNA = pseudouridine(38/39/40) in tRNA. Its function is as follows. Formation of pseudouridine at positions 38, 39 and 40 in the anticodon stem and loop of transfer RNAs. The protein is tRNA pseudouridine synthase A of Vibrio campbellii (strain ATCC BAA-1116).